The chain runs to 92 residues: Probable Fe(2+)-trafficking protein (92 aa).

It belongs to the Fe(2+)-trafficking protein family.

Could be a mediator in iron transactions between iron acquisition and iron-requiring processes, such as synthesis and/or repair of Fe-S clusters in biosynthetic enzymes. This Shewanella frigidimarina (strain NCIMB 400) protein is Probable Fe(2+)-trafficking protein.